The sequence spans 193 residues: Protein D5 (193 aa).

Repression of replication initiation (possible). The polypeptide is Protein D5 (ddpE) (Dictyostelium discoideum (Social amoeba)).